A 175-amino-acid chain; its full sequence is MSGNVYKTLLTLLVYGLIMHCNVYCSPDRWTPVPGAKLEEEVYDEDGNTLQDFALRAGAPGGGGPRPRWGRCTALYYPPGKRHADGIFSKAYRKLLGQLSARNYLHSLMAKRVGGASSGLGDEAEPLSKRHIDGIFTDSYSRYRKQMAVKKYLAAVLGKRYKQRVKNKGRRVAYL.

Positions 1 to 23 (MSGNVYKTLLTLLVYGLIMHCNV) are cleaved as a signal peptide. Positions 24-80 (YCSPDRWTPVPGAKLEEEVYDEDGNTLQDFALRAGAPGGGGPRPRWGRCTALYYPPG) are excised as a propeptide. The tract at residues 149–157 (VKKYLAAVL) is important for receptor binding. Leu157 carries the post-translational modification Leucine amide. Lysine amide is present on Lys168. Positions 172-175 (VAYL) are excised as a propeptide.

This sequence belongs to the glucagon family.

The protein resides in the secreted. Primary role of GRF is to release GH from the pituitary. Its function is as follows. PACAP is a neuropeptide involved in diverse array of physiological processes through activating the PACAP subfamily of class B1 G protein-coupled receptors: VIP receptor 1 (VIPR1), VIP receptor 2 (VIPR2), and PACAP type I receptor (ADCYAP1R1). Exerts neuroprotective and general cytoprotective effects due to anti-apoptotic, anti-inflammatory, and antioxidant actions. Promotes neuron projection development through the RAPGEF2/Rap1/B-Raf/ERK pathway. In chromaffin cells, induces long-lasting increase of intracellular calcium concentrations and neuroendocrine secretion. Involved in the control of glucose homeostasis, induces insulin secretion by pancreatic beta cells. PACAP exists in two bioactive forms from proteolysis of the same precursor protein, PACAP27 and PACAP38, which differ by eleven amino acid residues in the C-terminus. The polypeptide is Glucagon family neuropeptides (ADCYAP1) (Gallus gallus (Chicken)).